We begin with the raw amino-acid sequence, 160 residues long: Eukaryotic translation initiation factor 5A-4 (160 aa).

The segment covering 1 to 12 (MSDEEHHFESKA) has biased composition (basic and acidic residues). The disordered stretch occupies residues 1–21 (MSDEEHHFESKADAGASKTYP). Lysine 52 is modified (hypusine).

Belongs to the eIF-5A family. Lys-52 undergoes hypusination, a unique post-translational modification that consists in the addition of a butylamino group from spermidine to lysine side chain, leading to the formation of the unusual amino acid hypusine. eIF-5As are the only known proteins to undergo this modification, which is essential for their function.

In terms of biological role, translation factor that promotes translation elongation and termination, particularly upon ribosome stalling at specific amino acid sequence contexts. Binds between the exit (E) and peptidyl (P) site of the ribosome and promotes rescue of stalled ribosome: specifically required for efficient translation of polyproline-containing peptides as well as other motifs that stall the ribosome. Acts as a ribosome quality control (RQC) cofactor by joining the RQC complex to facilitate peptidyl transfer during CAT tailing step. This chain is Eukaryotic translation initiation factor 5A-4, found in Solanum lycopersicum (Tomato).